A 475-amino-acid chain; its full sequence is Glycogen synthase (475 aa).

Lysine 15 lines the ADP-alpha-D-glucose pocket.

The protein belongs to the glycosyltransferase 1 family. Bacterial/plant glycogen synthase subfamily.

The catalysed reaction is [(1-&gt;4)-alpha-D-glucosyl](n) + ADP-alpha-D-glucose = [(1-&gt;4)-alpha-D-glucosyl](n+1) + ADP + H(+). It participates in glycan biosynthesis; glycogen biosynthesis. Synthesizes alpha-1,4-glucan chains using ADP-glucose. This Alkaliphilus metalliredigens (strain QYMF) protein is Glycogen synthase.